The following is a 155-amino-acid chain: MSRKGSTPQRNVLPDPKYGSETIARFINMVMKSGKKSVAEKIVYGAMNVIGEKNSNAIELLQKALDNVSPAVEVKSRRVGGATYQVPVEVRASRRMALAMRWLIDSSRKRGENSMPRKLAAELLDASESRGGAIKKRDETHRMAEANKAFAHYRW.

The protein belongs to the universal ribosomal protein uS7 family. As to quaternary structure, part of the 30S ribosomal subunit. Contacts proteins S9 and S11.

Functionally, one of the primary rRNA binding proteins, it binds directly to 16S rRNA where it nucleates assembly of the head domain of the 30S subunit. Is located at the subunit interface close to the decoding center, probably blocks exit of the E-site tRNA. The sequence is that of Small ribosomal subunit protein uS7 from Xylella fastidiosa (strain M23).